A 291-amino-acid chain; its full sequence is Cilia- and flagella-associated protein 298 (291 aa).

This sequence belongs to the CFAP298 family.

The sequence is that of Cilia- and flagella-associated protein 298 from Drosophila melanogaster (Fruit fly).